The following is a 117-amino-acid chain: Large ribosomal subunit protein bL19 (117 aa).

This sequence belongs to the bacterial ribosomal protein bL19 family.

This protein is located at the 30S-50S ribosomal subunit interface and may play a role in the structure and function of the aminoacyl-tRNA binding site. This chain is Large ribosomal subunit protein bL19, found in Shewanella denitrificans (strain OS217 / ATCC BAA-1090 / DSM 15013).